Consider the following 679-residue polypeptide: Methionine--tRNA ligase (679 aa).

The 'HIGH' region motif lies at Pro-15–His-25. Cys-146, Cys-149, Cys-159, and Cys-162 together coordinate Zn(2+). The short motif at Lys-332–Ser-336 is the 'KMSKS' region element. Lys-335 contacts ATP. Positions Asp-578–Lys-679 constitute a tRNA-binding domain.

This sequence belongs to the class-I aminoacyl-tRNA synthetase family. MetG type 1 subfamily. As to quaternary structure, homodimer. It depends on Zn(2+) as a cofactor.

The protein resides in the cytoplasm. The enzyme catalyses tRNA(Met) + L-methionine + ATP = L-methionyl-tRNA(Met) + AMP + diphosphate. Its function is as follows. Is required not only for elongation of protein synthesis but also for the initiation of all mRNA translation through initiator tRNA(fMet) aminoacylation. This is Methionine--tRNA ligase from Shewanella halifaxensis (strain HAW-EB4).